We begin with the raw amino-acid sequence, 380 residues long: Cytochrome b (380 aa).

Transmembrane regions (helical) follow at residues 33 to 53, 77 to 98, 113 to 133, and 178 to 198; these read FGSL…FLAM, WLIR…YLHV, WNIG…GYVL, and FFAF…LHLL. Heme b-binding residues include histidine 83 and histidine 97. Heme b contacts are provided by histidine 182 and histidine 196. Histidine 201 contributes to the a ubiquinone binding site. 4 consecutive transmembrane segments (helical) span residues 226-246, 288-308, 320-340, and 347-367; these read YKDL…TLFS, LGGV…PLLH, LTQI…WIGG, and FITV…ILIP.

It belongs to the cytochrome b family. In terms of assembly, the cytochrome bc1 complex contains 3 respiratory subunits (MT-CYB, CYC1 and UQCRFS1), 2 core proteins (UQCRC1 and UQCRC2) and probably 6 low-molecular weight proteins. The cofactor is heme b.

The protein resides in the mitochondrion inner membrane. Component of the ubiquinol-cytochrome c reductase complex (complex III or cytochrome b-c1 complex) that is part of the mitochondrial respiratory chain. The b-c1 complex mediates electron transfer from ubiquinol to cytochrome c. Contributes to the generation of a proton gradient across the mitochondrial membrane that is then used for ATP synthesis. This is Cytochrome b (mt-cyb) from Allocyttus niger (Black oreo dory).